The sequence spans 267 residues: Inositol-1-monophosphatase (267 aa).

Positions 66, 84, 86, and 87 each coordinate Mg(2+). Residue Glu-66 coordinates substrate. Substrate is bound by residues 86–89, Arg-182, and Asp-213; that span reads LDGS. Asp-213 provides a ligand contact to Mg(2+).

It belongs to the inositol monophosphatase superfamily. Requires Mg(2+) as cofactor.

The enzyme catalyses a myo-inositol phosphate + H2O = myo-inositol + phosphate. In Aeropyrum pernix (strain ATCC 700893 / DSM 11879 / JCM 9820 / NBRC 100138 / K1), this protein is Inositol-1-monophosphatase (suhB).